The chain runs to 139 residues: Plastocyanin (139 aa).

Positions 1 to 34 (MKLIAASLRRLSLAVLTVLLVVSSFAVFTPSASA) are cleaved as a signal peptide. The region spanning 35-139 (ETYTVKLGSD…GMVGKITVAG (105 aa)) is the Plastocyanin-like domain. 4 residues coordinate Cu cation: histidine 73, cysteine 123, histidine 126, and methionine 131.

It belongs to the plastocyanin family. The cofactor is Cu(2+).

Its subcellular location is the cellular thylakoid membrane. Its function is as follows. Participates in electron transfer between P700 and the cytochrome b6-f complex in photosystem I. The protein is Plastocyanin (petE) of Nostoc sp. (strain PCC 7120 / SAG 25.82 / UTEX 2576).